The sequence spans 142 residues: Large ribosomal subunit protein uL11 (142 aa).

It belongs to the universal ribosomal protein uL11 family. Part of the ribosomal stalk of the 50S ribosomal subunit. Interacts with L10 and the large rRNA to form the base of the stalk. L10 forms an elongated spine to which L12 dimers bind in a sequential fashion forming a multimeric L10(L12)X complex. Post-translationally, one or more lysine residues are methylated.

Its function is as follows. Forms part of the ribosomal stalk which helps the ribosome interact with GTP-bound translation factors. This is Large ribosomal subunit protein uL11 from Maricaulis maris (strain MCS10) (Caulobacter maris).